The sequence spans 119 residues: Evasin P983 (119 aa).

The signal sequence occupies residues 1-21 (MKASFCVIASCLVVFALKGTA). Cystine bridges form between C37/C59, C55/C97, C72/C102, and C92/C111. N-linked (GlcNAc...) asparagine glycosylation is found at N48 and N67.

It localises to the secreted. Salivary chemokine-binding protein which binds to host chemokines CCL2, CCL3 and CCL8. This chain is Evasin P983, found in Amblyomma cajennense (Cayenne tick).